The sequence spans 517 residues: ATP synthase subunit alpha (517 aa).

173–180 (GDRQTGKT) contacts ATP.

This sequence belongs to the ATPase alpha/beta chains family. In terms of assembly, F-type ATPases have 2 components, CF(1) - the catalytic core - and CF(0) - the membrane proton channel. CF(1) has five subunits: alpha(3), beta(3), gamma(1), delta(1), epsilon(1). CF(0) has three main subunits: a(1), b(2) and c(9-12). The alpha and beta chains form an alternating ring which encloses part of the gamma chain. CF(1) is attached to CF(0) by a central stalk formed by the gamma and epsilon chains, while a peripheral stalk is formed by the delta and b chains.

The protein localises to the cell inner membrane. The enzyme catalyses ATP + H2O + 4 H(+)(in) = ADP + phosphate + 5 H(+)(out). In terms of biological role, produces ATP from ADP in the presence of a proton gradient across the membrane. The alpha chain is a regulatory subunit. The protein is ATP synthase subunit alpha of Legionella pneumophila (strain Lens).